The primary structure comprises 309 residues: METLLKRELGCSSVKATGHSGGGCISQGQSYDTDKGRVFVKVNSKAEARRMFEGEMASLTAILKTGTVKVPKPIKVVDAPGGGSMLVMEHLDMRYLSSHATKLGTQLADLHLENKRLGERLLKEAGTVGKGGEQAERQYVDQFGFDVVTCCGYLPQVNDWQKNWVEFYARQRIQPQMDMVEKKSGDREALELWSALQLKIPDLFRDLEIVPALLHGDLWGGNVAEDSSGPIIFDPASFYGHSEYELAIAGMFGGFSSSFYSAYHSKIPKTPGFEKRLQLYQLFHYLNHWNHFGSGYRGSSLNIMRNLSK.

A Phosphoserine modification is found at serine 20. Position 89 to 91 (89 to 91 (EHL)) interacts with ATP. Residue aspartate 217 is the Proton acceptor of the active site.

It belongs to the fructosamine kinase family.

It catalyses the reaction N(6)-D-ribulosyl-L-lysyl-[protein] + ATP = N(6)-(3-O-phospho-D-ribulosyl)-L-lysyl-[protein] + ADP + H(+). It carries out the reaction N(6)-(D-psicosyl)-L-lysyl-[protein] + ATP = N(6)-(3-O-phospho-D-psicosyl)-L-lysyl-[protein] + ADP + H(+). In terms of biological role, ketosamine-3-kinase involved in protein deglycation by mediating phosphorylation of ribuloselysine and psicoselysine on glycated proteins, to generate ribuloselysine-3 phosphate and psicoselysine-3 phosphate, respectively. Ribuloselysine-3 phosphate and psicoselysine-3 phosphate adducts are unstable and decompose under physiological conditions. Not able to phosphorylate fructoselysine. The chain is Ketosamine-3-kinase from Mus musculus (Mouse).